Here is an 869-residue protein sequence, read N- to C-terminus: DNA mismatch repair protein MutS (869 aa).

602 to 609 lines the ATP pocket; it reads GPNMSGKS.

This sequence belongs to the DNA mismatch repair MutS family.

Functionally, this protein is involved in the repair of mismatches in DNA. It is possible that it carries out the mismatch recognition step. This protein has a weak ATPase activity. The polypeptide is DNA mismatch repair protein MutS (Bacillus licheniformis (strain ATCC 14580 / DSM 13 / JCM 2505 / CCUG 7422 / NBRC 12200 / NCIMB 9375 / NCTC 10341 / NRRL NRS-1264 / Gibson 46)).